A 102-amino-acid chain; its full sequence is Aspartyl/glutamyl-tRNA(Asn/Gln) amidotransferase subunit C (102 aa).

Belongs to the GatC family. Heterotrimer of A, B and C subunits.

The enzyme catalyses L-glutamyl-tRNA(Gln) + L-glutamine + ATP + H2O = L-glutaminyl-tRNA(Gln) + L-glutamate + ADP + phosphate + H(+). It catalyses the reaction L-aspartyl-tRNA(Asn) + L-glutamine + ATP + H2O = L-asparaginyl-tRNA(Asn) + L-glutamate + ADP + phosphate + 2 H(+). In terms of biological role, allows the formation of correctly charged Asn-tRNA(Asn) or Gln-tRNA(Gln) through the transamidation of misacylated Asp-tRNA(Asn) or Glu-tRNA(Gln) in organisms which lack either or both of asparaginyl-tRNA or glutaminyl-tRNA synthetases. The reaction takes place in the presence of glutamine and ATP through an activated phospho-Asp-tRNA(Asn) or phospho-Glu-tRNA(Gln). The polypeptide is Aspartyl/glutamyl-tRNA(Asn/Gln) amidotransferase subunit C (Bordetella avium (strain 197N)).